A 260-amino-acid chain; its full sequence is DNA repair protein RecO (260 aa).

Belongs to the RecO family.

Its function is as follows. Involved in DNA repair and RecF pathway recombination. In Paracidovorax citrulli (strain AAC00-1) (Acidovorax citrulli), this protein is DNA repair protein RecO.